We begin with the raw amino-acid sequence, 205 residues long: Small ribosomal subunit protein uS4 (205 aa).

Basic and acidic residues predominate over residues 1-16 (MSKRETTKYKIDRRMG). Positions 1 to 46 (MSKRETTKYKIDRRMGENIWGRPKSPVNRRDYGPGQHGQRRKGKLS) are disordered. The 64-residue stretch at 94-157 (SRLDAVIYRA…KQLVLVLESV (64 aa)) folds into the S4 RNA-binding domain.

It belongs to the universal ribosomal protein uS4 family. As to quaternary structure, part of the 30S ribosomal subunit. Contacts protein S5. The interaction surface between S4 and S5 is involved in control of translational fidelity.

One of the primary rRNA binding proteins, it binds directly to 16S rRNA where it nucleates assembly of the body of the 30S subunit. In terms of biological role, with S5 and S12 plays an important role in translational accuracy. The protein is Small ribosomal subunit protein uS4 of Bartonella henselae (strain ATCC 49882 / DSM 28221 / CCUG 30454 / Houston 1) (Rochalimaea henselae).